The sequence spans 308 residues: D-alanine--D-alanine ligase (308 aa).

Positions 104-301 (KQIWQGSDLP…FDELCVAILE (198 aa)) constitute an ATP-grasp domain. An ATP-binding site is contributed by 130-185 (IAELGLPVIIKPVHEGSSVGMSKVEKAEDFAAAIEKATQHDAVVMAEKWITGREFT). Residues aspartate 255, glutamate 268, and asparagine 270 each coordinate Mg(2+).

The protein belongs to the D-alanine--D-alanine ligase family. Requires Mg(2+) as cofactor. The cofactor is Mn(2+).

Its subcellular location is the cytoplasm. The enzyme catalyses 2 D-alanine + ATP = D-alanyl-D-alanine + ADP + phosphate + H(+). Its pathway is cell wall biogenesis; peptidoglycan biosynthesis. Functionally, cell wall formation. This chain is D-alanine--D-alanine ligase, found in Acinetobacter baumannii (strain ACICU).